A 363-amino-acid chain; its full sequence is Biotin synthase (363 aa).

Positions 40-268 (NVVQVSTLLS…ETQVRLSAGR (229 aa)) constitute a Radical SAM core domain. The [4Fe-4S] cluster site is built by C55, C59, and C62. 4 residues coordinate [2Fe-2S] cluster: C99, C131, C191, and R263.

The protein belongs to the radical SAM superfamily. Biotin synthase family. Homodimer. [4Fe-4S] cluster is required as a cofactor. [2Fe-2S] cluster serves as cofactor.

It catalyses the reaction (4R,5S)-dethiobiotin + (sulfur carrier)-SH + 2 reduced [2Fe-2S]-[ferredoxin] + 2 S-adenosyl-L-methionine = (sulfur carrier)-H + biotin + 2 5'-deoxyadenosine + 2 L-methionine + 2 oxidized [2Fe-2S]-[ferredoxin]. The protein operates within cofactor biosynthesis; biotin biosynthesis; biotin from 7,8-diaminononanoate: step 2/2. Its function is as follows. Catalyzes the conversion of dethiobiotin (DTB) to biotin by the insertion of a sulfur atom into dethiobiotin via a radical-based mechanism. The protein is Biotin synthase of Flavobacterium johnsoniae (strain ATCC 17061 / DSM 2064 / JCM 8514 / BCRC 14874 / CCUG 350202 / NBRC 14942 / NCIMB 11054 / UW101) (Cytophaga johnsonae).